The chain runs to 884 residues: Probable ribonuclease ZC3H12C (884 aa).

Residues 66-108 form a disordered region; the sequence is KPTMDTVNSGKEGKGVSEENVSSGDSEGSTSSDHESEQLSSLS. Positions 87–96 are enriched in low complexity; that stretch reads SSGDSEGSTS. The residue at position 231 (S231) is a Phosphoserine. One can recognise an RNase NYN domain in the interval 246 to 401; it reads LRPVVIDGSN…LGRHGPSLDN (156 aa). The segment at 411 to 436 adopts a C3H1-type zinc-finger fold; the sequence is EHKKQPCPYGKKCTYGHKCKYYHPER. The segment covering 456–478 has biased composition (polar residues); it reads AAKTTNEGGLVKSNSVPCSTKAD. 3 disordered regions span residues 456-548, 716-739, and 755-776; these read AAKT…SGVH, VGARSSCPGDYPSPPSSAHSKAPH, and SRLYDSSPSRQRKPYSRQEGLG. Residues 500-516 show a composition bias toward basic and acidic residues; the sequence is VYQDIEEKLPTKNKLET. Residues 518-543 are compositionally biased toward polar residues; the sequence is SVPSLVSIPATSTAKPQSTTPLSNGL.

The protein belongs to the ZC3H12 family. The cofactor is Mg(2+).

Its function is as follows. May function as RNase and regulate the levels of target RNA species. This is Probable ribonuclease ZC3H12C (Zc3h12c) from Mus musculus (Mouse).